The sequence spans 1404 residues: DNA (cytosine-5)-methyltransferase 3 (1404 aa).

A compositionally biased stretch (basic residues) spans 1–10 (MKTKAGKQKK). The disordered stretch occupies residues 1–35 (MKTKAGKQKKRSVDSDDDVSRERRPKRATSGTNFK). Over residues 11–22 (RSVDSDDDVSRE) the composition is skewed to basic and acidic residues. A Glycyl lysine isopeptide (Lys-Gly) (interchain with G-Cter in ubiquitin) cross-link involves residue lysine 486. BAH domains are found at residues 614–748 (RKMD…FSLP) and 788–929 (IKYS…KKLP). The SAM-dependent MTase C5-type domain occupies 969–1402 (LATLDIFAGC…RKLKEALHLR (434 aa)). Cysteine 1085 is a catalytic residue.

It belongs to the class I-like SAM-binding methyltransferase superfamily. C5-methyltransferase family.

It is found in the nucleus. It carries out the reaction a 2'-deoxycytidine in DNA + S-adenosyl-L-methionine = a 5-methyl-2'-deoxycytidine in DNA + S-adenosyl-L-homocysteine + H(+). In terms of biological role, maintains chromatin CpG methylation that plays a role in genomic imprinting, regulation of embryogenesis and seed viability. Required for proper patterns of CG DNA methylation in dividing cells. Required during the endosperm development in seeds. The polypeptide is DNA (cytosine-5)-methyltransferase 3 (MET3) (Arabidopsis thaliana (Mouse-ear cress)).